The sequence spans 562 residues: Nucleoprotein (562 aa).

A binding site for the cap structure m7GTP region spans residues methionine 53–isoleucine 238. Positions 381 and 383 each coordinate Mn(2+). Glutamate 391, cysteine 498, histidine 501, and cysteine 522 together coordinate Zn(2+). Residue aspartate 526 coordinates Mn(2+).

This sequence belongs to the arenaviridae nucleocapsid protein family. As to quaternary structure, homomultimerizes to form the nucleocapsid. Binds to viral genomic RNA. Interacts with glycoprotein G2. Interacts with protein Z; this interaction probably directs the encapsidated genome to budding sites. Interacts with protein L; this interaction does not interfere with Z-L interaction. Interacts with host IKBKE (via Protein kinase domain); the interaction inhibits IKBKE kinase activity.

The protein resides in the virion. The protein localises to the host cytoplasm. Functionally, encapsidates the genome, protecting it from nucleases. The encapsidated genomic RNA is termed the nucleocapsid (NC). Serves as template for viral transcription and replication. The increased presence of protein N in host cell does not seem to trigger the switch from transcription to replication as observed in other negative strain RNA viruses. Through the interaction with host IKBKE, strongly inhibits the phosphorylation and nuclear translocation of host IRF3, a protein involved in interferon activation pathway, leading to the inhibition of interferon-beta and IRF3-dependent promoters activation. Also encodes a functional 3'-5' exoribonuclease that degrades preferentially dsRNA substrates and thereby participates in the suppression of interferon induction. The protein is Nucleoprotein of Bear Canyon mammarenavirus (isolate Mouse/United States/AV A0070039/2000) (BCNV).